The primary structure comprises 456 residues: METIKKNEVKTGKVIDLTHEGHGVVKVDRYPIFIPNALIDEEIKFKLIKVKKNFAIGKLIEVISESDDRVTPPCIYYAKCGGCQLQHMTYRAQLDMKREQVVNLFHRKGPFENTVIKETIGMVNPWRYRNKSQIPVGQSNSNQVIMGFYRQRSHDIIDMDSCLIQDRQHQEVMNRVKYWLNELNISIYNEKTKTGLIRHLVVRTGYHTDEMMVIFVTNGATFKQSELLVNKLKKEFPNITSIKQNINNSHSNVIMGRQSMTLYGKDKIEDQLSEVTYHISDLSFYQINSSQTEKLYQQALNYAQLTGKEIVLDTYCGIGTIGLYMAPLAKHVYGVEVVPQAIKDAEDNATKNQLKNTTFECGKAEDVILTWKSQGIKPDVVMVDPPRKGCDETFLTTLLKLNPKRIVYISCNPSTQQRDAQILAEQYELVEITPVDMFPQTTHIETVALFVRKEEE.

The 59-residue stretch at 3-61 (TIKKNEVKTGKVIDLTHEGHGVVKVDRYPIFIPNALIDEEIKFKLIKVKKNFAIGKLIE) folds into the TRAM domain. [4Fe-4S] cluster contacts are provided by cysteine 74, cysteine 80, cysteine 83, and cysteine 162. Residues glutamine 286, tyrosine 315, glutamate 336, and aspartate 384 each coordinate S-adenosyl-L-methionine. Cysteine 411 functions as the Nucleophile in the catalytic mechanism.

This sequence belongs to the class I-like SAM-binding methyltransferase superfamily. RNA M5U methyltransferase family.

This is an uncharacterized protein from Staphylococcus epidermidis (strain ATCC 12228 / FDA PCI 1200).